The chain runs to 422 residues: UDP-N-acetylglucosamine 1-carboxyvinyltransferase (422 aa).

Residue 22 to 23 coordinates phosphoenolpyruvate; it reads KN. Arg94 contributes to the UDP-N-acetyl-alpha-D-glucosamine binding site. Cys118 serves as the catalytic Proton donor. The residue at position 118 (Cys118) is a 2-(S-cysteinyl)pyruvic acid O-phosphothioketal. UDP-N-acetyl-alpha-D-glucosamine-binding positions include 123-127, 163-166, Asp308, and Ile330; these read RPVDL and KVSV.

This sequence belongs to the EPSP synthase family. MurA subfamily.

The protein resides in the cytoplasm. The catalysed reaction is phosphoenolpyruvate + UDP-N-acetyl-alpha-D-glucosamine = UDP-N-acetyl-3-O-(1-carboxyvinyl)-alpha-D-glucosamine + phosphate. It functions in the pathway cell wall biogenesis; peptidoglycan biosynthesis. Cell wall formation. Adds enolpyruvyl to UDP-N-acetylglucosamine. The polypeptide is UDP-N-acetylglucosamine 1-carboxyvinyltransferase (Yersinia enterocolitica serotype O:8 / biotype 1B (strain NCTC 13174 / 8081)).